We begin with the raw amino-acid sequence, 216 residues long: Protein-L-isoaspartate O-methyltransferase (216 aa).

The active site involves S64.

It belongs to the methyltransferase superfamily. L-isoaspartyl/D-aspartyl protein methyltransferase family.

It is found in the cytoplasm. It carries out the reaction [protein]-L-isoaspartate + S-adenosyl-L-methionine = [protein]-L-isoaspartate alpha-methyl ester + S-adenosyl-L-homocysteine. Its function is as follows. Catalyzes the methyl esterification of L-isoaspartyl residues in peptides and proteins that result from spontaneous decomposition of normal L-aspartyl and L-asparaginyl residues. It plays a role in the repair and/or degradation of damaged proteins. This Paracoccus denitrificans (strain Pd 1222) protein is Protein-L-isoaspartate O-methyltransferase.